Here is a 366-residue protein sequence, read N- to C-terminus: Chorismate synthase (366 aa).

Residues R48 and R54 each coordinate NADP(+). Residues 125–127, 238–239, G278, 293–297, and R319 contribute to the FMN site; these read RSS, NA, and KPTSS.

Belongs to the chorismate synthase family. In terms of assembly, homotetramer. The cofactor is FMNH2.

The enzyme catalyses 5-O-(1-carboxyvinyl)-3-phosphoshikimate = chorismate + phosphate. It functions in the pathway metabolic intermediate biosynthesis; chorismate biosynthesis; chorismate from D-erythrose 4-phosphate and phosphoenolpyruvate: step 7/7. Functionally, catalyzes the anti-1,4-elimination of the C-3 phosphate and the C-6 proR hydrogen from 5-enolpyruvylshikimate-3-phosphate (EPSP) to yield chorismate, which is the branch point compound that serves as the starting substrate for the three terminal pathways of aromatic amino acid biosynthesis. This reaction introduces a second double bond into the aromatic ring system. The chain is Chorismate synthase from Burkholderia cenocepacia (strain HI2424).